We begin with the raw amino-acid sequence, 316 residues long: Protoheme IX farnesyltransferase 2 (316 aa).

Polar residues predominate over residues 1–15 (MEQNLNSEQKPQSSA). Residues 1-24 (MEQNLNSEQKPQSSAKPRGKSSRS) form a disordered region. Helical transmembrane passes span 62–82 (IPEM…AGAF), 117–137 (IVML…AAAF), 163–183 (IGSI…STDI), 188–208 (IARF…AIAI), 231–251 (TYYQ…LFGS), 252–272 (LSVG…VMSI), and 293–313 (LFHM…GVIF).

The protein belongs to the UbiA prenyltransferase family. Protoheme IX farnesyltransferase subfamily. In terms of assembly, interacts with CtaA.

Its subcellular location is the cell membrane. The enzyme catalyses heme b + (2E,6E)-farnesyl diphosphate + H2O = Fe(II)-heme o + diphosphate. The protein operates within porphyrin-containing compound metabolism; heme O biosynthesis; heme O from protoheme: step 1/1. Its function is as follows. Converts heme B (protoheme IX) to heme O by substitution of the vinyl group on carbon 2 of heme B porphyrin ring with a hydroxyethyl farnesyl side group. The chain is Protoheme IX farnesyltransferase 2 from Lysinibacillus sphaericus (strain C3-41).